We begin with the raw amino-acid sequence, 403 residues long: Phosphoglycerate kinase (403 aa).

Substrate-binding positions include 24 to 26 (DLN), R39, 62 to 65 (HLGR), R121, and R161. ATP is bound by residues K211, G299, E330, and 359–362 (GGDS).

It belongs to the phosphoglycerate kinase family. In terms of assembly, monomer.

It is found in the cytoplasm. The catalysed reaction is (2R)-3-phosphoglycerate + ATP = (2R)-3-phospho-glyceroyl phosphate + ADP. The protein operates within carbohydrate degradation; glycolysis; pyruvate from D-glyceraldehyde 3-phosphate: step 2/5. The polypeptide is Phosphoglycerate kinase (Corynebacterium kroppenstedtii (strain DSM 44385 / JCM 11950 / CIP 105744 / CCUG 35717)).